A 496-amino-acid chain; its full sequence is L-arabinose isomerase (496 aa).

Mn(2+) contacts are provided by glutamate 306, glutamate 331, histidine 348, and histidine 447.

The protein belongs to the arabinose isomerase family. Requires Mn(2+) as cofactor.

The catalysed reaction is beta-L-arabinopyranose = L-ribulose. It functions in the pathway carbohydrate degradation; L-arabinose degradation via L-ribulose; D-xylulose 5-phosphate from L-arabinose (bacterial route): step 1/3. In terms of biological role, catalyzes the conversion of L-arabinose to L-ribulose. This is L-arabinose isomerase from Geobacillus thermodenitrificans (strain NG80-2).